A 354-amino-acid chain; its full sequence is Rhodopsin (354 aa).

The Extracellular segment spans residues 1–36 (MNGTEGPYFYIPMVNTTGIVRSPYDYPQYYLVNPAA). N-linked (GlcNAc...) asparagine glycans are attached at residues Asn2 and Asn15. The helical transmembrane segment at 37 to 61 (YAALGAYMFFLILVGFPINFLTLYV) threads the bilayer. The Cytoplasmic portion of the chain corresponds to 62-73 (TIEHKKLRTPLN). A helical transmembrane segment spans residues 74-96 (YILLNLAVANLFMVFGGFTTTMY). Residues 97–110 (TSMHGYFVLGRLGC) lie on the Extracellular side of the membrane. Cys110 and Cys187 are joined by a disulfide. A helical transmembrane segment spans residues 111–133 (NLEGFFATLGGEIALWSLVVLAV). A 'Ionic lock' involved in activated form stabilization motif is present at residues 134–136 (ERW). Residues 134–152 (ERWMVVCKPISNFRFGENH) are Cytoplasmic-facing. Residues 153–173 (AIMGLAMTWLMASACAVPPLV) form a helical membrane-spanning segment. At 174–202 (GWSRYIPEGMQCSCGVDYYTRAEGFNNES) the chain is on the extracellular side. N-linked (GlcNAc...) asparagine glycosylation occurs at Asn200. The helical transmembrane segment at 203–224 (FVVYMFCCHFMIPLIIVFFCYG) threads the bilayer. At 225–252 (RLLCAVKEAAAAQQESETTQRAEREVTR) the chain is on the cytoplasmic side. The chain crosses the membrane as a helical span at residues 253–274 (MVVIMVIAFLVCWLPYASVAWW). Residues 275 to 286 (IFTHQGSEFGPV) lie on the Extracellular side of the membrane. A helical transmembrane segment spans residues 287 to 308 (FMTIPAFFAKSSSIYNPMIYIC). Lys296 carries the post-translational modification N6-(retinylidene)lysine. At 309 to 354 (MNKQFRNCMITTLCCGKNPFEEEEGASSTASKTEASSVSSSSVSPA) the chain is on the cytoplasmic side. Residues Cys322 and Cys323 are each lipidated (S-palmitoyl cysteine). The segment at 329–354 (EEEEGASSTASKTEASSVSSSSVSPA) is disordered. Over residues 334 to 354 (ASSTASKTEASSVSSSSVSPA) the composition is skewed to low complexity.

The protein belongs to the G-protein coupled receptor 1 family. Opsin subfamily. In terms of processing, phosphorylated on some or all of the serine and threonine residues present in the C-terminal region. Post-translationally, contains one covalently linked retinal chromophore.

The protein localises to the membrane. It localises to the cell projection. Its subcellular location is the cilium. The protein resides in the photoreceptor outer segment. In terms of biological role, photoreceptor required for image-forming vision at low light intensity. While most salt water fish species use retinal as chromophore, most freshwater fish use 3-dehydroretinal, or a mixture of retinal and 3-dehydroretinal. Light-induced isomerization of 11-cis to all-trans retinal triggers a conformational change that activates signaling via G-proteins. Subsequent receptor phosphorylation mediates displacement of the bound G-protein alpha subunit by arrestin and terminates signaling. This chain is Rhodopsin (rho), found in Mullus surmuletus (Striped red mullet).